The following is a 240-amino-acid chain: Uridylate kinase (240 aa).

An ATP-binding site is contributed by 13-16; that stretch reads KLSG. Residues 21–26 form an involved in allosteric activation by GTP region; sequence GDKGFG. Residue Gly55 coordinates UMP. Residues Gly56 and Arg60 each coordinate ATP. Residues Asp75 and 136 to 143 contribute to the UMP site; that span reads IGNPYFST. Residues Asn164, Tyr170, and Asp173 each contribute to the ATP site.

Belongs to the UMP kinase family. Homohexamer.

The protein resides in the cytoplasm. The catalysed reaction is UMP + ATP = UDP + ADP. Its pathway is pyrimidine metabolism; CTP biosynthesis via de novo pathway; UDP from UMP (UMPK route): step 1/1. Its activity is regulated as follows. Allosterically activated by GTP. Inhibited by UTP. In terms of biological role, catalyzes the reversible phosphorylation of UMP to UDP. The polypeptide is Uridylate kinase (Staphylococcus haemolyticus (strain JCSC1435)).